Consider the following 155-residue polypeptide: HTH-type transcriptional regulator IscR (155 aa).

The region spanning 2–136 (KLSTKGRYAM…HQTRLSDIIK (135 aa)) is the HTH rrf2-type domain. Residues 30–53 (LAEVSKRQDISLPYLEQLFVKLRR) constitute a DNA-binding region (H-T-H motif). Residues 141 to 145 (PCPAV) are heme regulatory motif (HRM). Cys142 serves as a coordination point for [2Fe-2S] cluster.

[2Fe-2S] cluster is required as a cofactor.

Its function is as follows. Regulates the transcription of several operons and genes involved in the biogenesis of Fe-S clusters and Fe-S-containing proteins. Functions as a transcriptional repressor of genes involved in iron metabolism by directly binding to the promoter region of genes preceded by the Iron-Rhodo-box motif. Binds to iscR and hemP promoter regions independently of an Fe-S cluster, but their transcriptional repression is Fe-S cluster-dependent. Seems to activate some target genes in a Fe-S cluster-independent manner. Negatively regulates its own transcription in the presence of iron only. The sequence is that of HTH-type transcriptional regulator IscR from Cereibacter sphaeroides (strain ATCC 17023 / DSM 158 / JCM 6121 / CCUG 31486 / LMG 2827 / NBRC 12203 / NCIMB 8253 / ATH 2.4.1.) (Rhodobacter sphaeroides).